The chain runs to 542 residues: Chaperonin GroEL (542 aa).

Residues 29 to 32, 86 to 90, Gly-413, 476 to 478, and Asp-492 contribute to the ATP site; these read TLGP, DGTTT, and NAA. A disordered region spans residues 521–542; it reads QPDENGPAAGPDMGMGGMGGMM. Residues 533 to 542 are compositionally biased toward gly residues; sequence MGMGGMGGMM.

This sequence belongs to the chaperonin (HSP60) family. As to quaternary structure, forms a cylinder of 14 subunits composed of two heptameric rings stacked back-to-back. Interacts with the co-chaperonin GroES.

The protein localises to the cytoplasm. It carries out the reaction ATP + H2O + a folded polypeptide = ADP + phosphate + an unfolded polypeptide.. Functionally, together with its co-chaperonin GroES, plays an essential role in assisting protein folding. The GroEL-GroES system forms a nano-cage that allows encapsulation of the non-native substrate proteins and provides a physical environment optimized to promote and accelerate protein folding. The chain is Chaperonin GroEL from Listeria innocua serovar 6a (strain ATCC BAA-680 / CLIP 11262).